The primary structure comprises 416 residues: Gamma-glutamyl phosphate reductase (416 aa).

This sequence belongs to the gamma-glutamyl phosphate reductase family.

It localises to the cytoplasm. It catalyses the reaction L-glutamate 5-semialdehyde + phosphate + NADP(+) = L-glutamyl 5-phosphate + NADPH + H(+). It participates in amino-acid biosynthesis; L-proline biosynthesis; L-glutamate 5-semialdehyde from L-glutamate: step 2/2. Catalyzes the NADPH-dependent reduction of L-glutamate 5-phosphate into L-glutamate 5-semialdehyde and phosphate. The product spontaneously undergoes cyclization to form 1-pyrroline-5-carboxylate. This chain is Gamma-glutamyl phosphate reductase, found in Salmonella newport (strain SL254).